The following is a 159-amino-acid chain: MMRFVPLFLACISLPAFQATEFTKCEVSHAIEDMDGYQGISLLEWTCVLFHTSGYDSQAIVKNNGSTEYGLFQISNRNWCKSSEFPESENICDISCDKFLDDELADDIVCAKKIVAIKGIDYWKAHKPMCSEKLEQWRCEKPGAPALVVPALNSETPVP.

A signal peptide spans 1–19 (MMRFVPLFLACISLPAFQA). One can recognise a C-type lysozyme domain in the interval 20–142 (TEFTKCEVSH…KLEQWRCEKP (123 aa)). 4 disulfides stabilise this stretch: Cys25–Cys139, Cys47–Cys130, Cys80–Cys96, and Cys92–Cys110. The N-linked (GlcNAc...) asparagine glycan is linked to Asn64. Positions 98, 101, 106, and 107 each coordinate Ca(2+).

Belongs to the glycosyl hydrolase 22 family. Lactose synthase (LS) is a heterodimer of a catalytic component, beta1,4-galactosyltransferase (beta4Gal-T1) and a regulatory component, alpha-lactalbumin (LA). As to expression, mammary gland specific. Secreted in milk.

Its subcellular location is the secreted. Its function is as follows. Regulatory subunit of lactose synthase, changes the substrate specificity of galactosyltransferase in the mammary gland making glucose a good acceptor substrate for this enzyme. This enables LS to synthesize lactose, the major carbohydrate component of milk. In other tissues, galactosyltransferase transfers galactose onto the N-acetylglucosamine of the oligosaccharide chains in glycoproteins. The chain is Alpha-lactalbumin (Lalba) from Rattus norvegicus (Rat).